The following is an 88-amino-acid chain: Small ribosomal subunit protein uS17 (88 aa).

The protein belongs to the universal ribosomal protein uS17 family. In terms of assembly, part of the 30S ribosomal subunit.

One of the primary rRNA binding proteins, it binds specifically to the 5'-end of 16S ribosomal RNA. The protein is Small ribosomal subunit protein uS17 of Dechloromonas aromatica (strain RCB).